We begin with the raw amino-acid sequence, 280 residues long: UDP-3-O-acyl-N-acetylglucosamine deacetylase (280 aa).

Zn(2+) is bound by residues His79, His237, and Asp241. His264 functions as the Proton donor in the catalytic mechanism.

This sequence belongs to the LpxC family. The cofactor is Zn(2+).

The enzyme catalyses a UDP-3-O-[(3R)-3-hydroxyacyl]-N-acetyl-alpha-D-glucosamine + H2O = a UDP-3-O-[(3R)-3-hydroxyacyl]-alpha-D-glucosamine + acetate. The protein operates within glycolipid biosynthesis; lipid IV(A) biosynthesis; lipid IV(A) from (3R)-3-hydroxytetradecanoyl-[acyl-carrier-protein] and UDP-N-acetyl-alpha-D-glucosamine: step 2/6. Catalyzes the hydrolysis of UDP-3-O-myristoyl-N-acetylglucosamine to form UDP-3-O-myristoylglucosamine and acetate, the committed step in lipid A biosynthesis. This Chlamydia abortus (strain DSM 27085 / S26/3) (Chlamydophila abortus) protein is UDP-3-O-acyl-N-acetylglucosamine deacetylase.